A 465-amino-acid polypeptide reads, in one-letter code: Protein DML1 (465 aa).

It belongs to the misato family.

Its subcellular location is the mitochondrion. Its function is as follows. Involved in the partitioning of the mitochondrial organelle and mitochondrial DNA (mtDNA) inheritance. The polypeptide is Protein DML1 (DML1) (Eremothecium gossypii (strain ATCC 10895 / CBS 109.51 / FGSC 9923 / NRRL Y-1056) (Yeast)).